A 305-amino-acid chain; its full sequence is Olfactory receptor 4X1 (305 aa).

Residues 1-23 lie on the Extracellular side of the membrane; the sequence is MVATNNVTEIIFVGFSQNWSEQR. Residues asparagine 6 and asparagine 18 are each glycosylated (N-linked (GlcNAc...) asparagine). Residues 24–47 form a helical membrane-spanning segment; the sequence is VISVMFLLMYTAVVLGNGLIVVTI. The Cytoplasmic portion of the chain corresponds to 48–55; the sequence is LASKVLTS. The chain crosses the membrane as a helical span at residues 56–77; it reads PMYFFLSYLSFVEICYCSVMAP. At 78 to 98 the chain is on the extracellular side; that stretch reads KLIFDSFIKRKVISLKGCLTQ. The cysteines at positions 95 and 187 are disulfide-linked. Residues 99–118 traverse the membrane as a helical segment; that stretch reads MFSLHFFGGTEAFLLMVMAY. Residues 119–137 are Cytoplasmic-facing; sequence DRYVAICKPLHYMAIMNQR. The helical transmembrane segment at 138-156 threads the bilayer; that stretch reads MCGLLVRIAWGGGLLHSVG. At 157-193 the chain is on the extracellular side; it reads QTFLIFQLPFCGPNIMDHYFCDVHPVLELACADTFFI. The chain crosses the membrane as a helical span at residues 194 to 217; it reads SLLIITNGGSISVVSFFVLMASYL. Residues 218–233 lie on the Cytoplasmic side of the membrane; the sequence is IILHFLRSHNLEGQHK. A helical membrane pass occupies residues 234–256; it reads ALSTCASHVTVVDLFFIPCSLVY. At 257–267 the chain is on the extracellular side; that stretch reads IRPCVTLPADK. Residues 268–287 form a helical membrane-spanning segment; the sequence is IVAVFYTVVTPLLNPVIYSF. Residues 288 to 305 lie on the Cytoplasmic side of the membrane; sequence RNAEVKNAMRRFIGGKVI.

Belongs to the G-protein coupled receptor 1 family.

The protein resides in the cell membrane. In terms of biological role, odorant receptor. This is Olfactory receptor 4X1 (OR4X1) from Homo sapiens (Human).